Here is a 231-residue protein sequence, read N- to C-terminus: 2-C-methyl-D-erythritol 4-phosphate cytidylyltransferase (231 aa).

The protein belongs to the IspD/TarI cytidylyltransferase family. IspD subfamily.

It catalyses the reaction 2-C-methyl-D-erythritol 4-phosphate + CTP + H(+) = 4-CDP-2-C-methyl-D-erythritol + diphosphate. It participates in isoprenoid biosynthesis; isopentenyl diphosphate biosynthesis via DXP pathway; isopentenyl diphosphate from 1-deoxy-D-xylulose 5-phosphate: step 2/6. Catalyzes the formation of 4-diphosphocytidyl-2-C-methyl-D-erythritol from CTP and 2-C-methyl-D-erythritol 4-phosphate (MEP). This chain is 2-C-methyl-D-erythritol 4-phosphate cytidylyltransferase, found in Dictyoglomus thermophilum (strain ATCC 35947 / DSM 3960 / H-6-12).